Here is a 197-residue protein sequence, read N- to C-terminus: Putative manganese efflux pump MntP 1 (197 aa).

The next 6 membrane-spanning stretches (helical) occupy residues 8–28 (VILL…GLGA), 43–63 (VYAA…GYLL), 66–86 (VLLG…LILL), 123–143 (LAIA…LLAL), 146–166 (WLAC…GIYL), and 176–196 (DKAE…VMFI).

This sequence belongs to the MntP (TC 9.B.29) family.

The protein localises to the cell inner membrane. Its function is as follows. Probably functions as a manganese efflux pump. This is Putative manganese efflux pump MntP 1 from Psychrobacter cryohalolentis (strain ATCC BAA-1226 / DSM 17306 / VKM B-2378 / K5).